We begin with the raw amino-acid sequence, 440 residues long: Chromosome partition protein MukF (440 aa).

The leucine-zipper stretch occupies residues 208 to 236 (LSETSGTLRELQDTLEAAGDKLQANLLRI).

Belongs to the MukF family. Interacts, and probably forms a ternary complex, with MukE and MukB via its C-terminal region. The complex formation is stimulated by calcium or magnesium. It is required for an interaction between MukE and MukB.

It localises to the cytoplasm. The protein localises to the nucleoid. Functionally, involved in chromosome condensation, segregation and cell cycle progression. May participate in facilitating chromosome segregation by condensation DNA from both sides of a centrally located replisome during cell division. Not required for mini-F plasmid partitioning. Probably acts via its interaction with MukB and MukE. Overexpression results in anucleate cells. It has a calcium binding activity. The polypeptide is Chromosome partition protein MukF (Photorhabdus laumondii subsp. laumondii (strain DSM 15139 / CIP 105565 / TT01) (Photorhabdus luminescens subsp. laumondii)).